A 384-amino-acid polypeptide reads, in one-letter code: Lipid-A-disaccharide synthase (384 aa).

This sequence belongs to the LpxB family.

The catalysed reaction is a lipid X + a UDP-2-N,3-O-bis[(3R)-3-hydroxyacyl]-alpha-D-glucosamine = a lipid A disaccharide + UDP + H(+). It participates in bacterial outer membrane biogenesis; LPS lipid A biosynthesis. Functionally, condensation of UDP-2,3-diacylglucosamine and 2,3-diacylglucosamine-1-phosphate to form lipid A disaccharide, a precursor of lipid A, a phosphorylated glycolipid that anchors the lipopolysaccharide to the outer membrane of the cell. The polypeptide is Lipid-A-disaccharide synthase (Geobacter sulfurreducens (strain ATCC 51573 / DSM 12127 / PCA)).